We begin with the raw amino-acid sequence, 468 residues long: Cysteine--tRNA ligase (468 aa).

Residue cysteine 33 participates in Zn(2+) binding. The 'HIGH' region motif lies at 35 to 45 (ATVQGLPHIGH). Positions 211, 236, and 240 each coordinate Zn(2+). The 'KMSKS' region signature appears at 267–271 (KMSKS). Lysine 270 contributes to the ATP binding site.

It belongs to the class-I aminoacyl-tRNA synthetase family. As to quaternary structure, monomer. Zn(2+) serves as cofactor.

Its subcellular location is the cytoplasm. The catalysed reaction is tRNA(Cys) + L-cysteine + ATP = L-cysteinyl-tRNA(Cys) + AMP + diphosphate. The chain is Cysteine--tRNA ligase from Mycolicibacterium paratuberculosis (strain ATCC BAA-968 / K-10) (Mycobacterium paratuberculosis).